Reading from the N-terminus, the 505-residue chain is ATP synthase subunit alpha (505 aa).

Position 171 to 178 (171 to 178 (GDRQTGKT)) interacts with ATP.

It belongs to the ATPase alpha/beta chains family. F-type ATPases have 2 components, CF(1) - the catalytic core - and CF(0) - the membrane proton channel. CF(1) has five subunits: alpha(3), beta(3), gamma(1), delta(1), epsilon(1). CF(0) has three main subunits: a(1), b(2) and c(9-12). The alpha and beta chains form an alternating ring which encloses part of the gamma chain. CF(1) is attached to CF(0) by a central stalk formed by the gamma and epsilon chains, while a peripheral stalk is formed by the delta and b chains.

Its subcellular location is the cell inner membrane. The enzyme catalyses ATP + H2O + 4 H(+)(in) = ADP + phosphate + 5 H(+)(out). Its function is as follows. Produces ATP from ADP in the presence of a proton gradient across the membrane. The alpha chain is a regulatory subunit. In Campylobacter fetus subsp. fetus (strain 82-40), this protein is ATP synthase subunit alpha.